The sequence spans 109 residues: Nucleoid-associated protein Ldb1634 (109 aa).

The disordered stretch occupies residues 18 to 40 (MMKQAKKLQEQMAQEQENITTQE).

The protein belongs to the YbaB/EbfC family. As to quaternary structure, homodimer.

The protein localises to the cytoplasm. It localises to the nucleoid. Its function is as follows. Binds to DNA and alters its conformation. May be involved in regulation of gene expression, nucleoid organization and DNA protection. The sequence is that of Nucleoid-associated protein Ldb1634 from Lactobacillus delbrueckii subsp. bulgaricus (strain ATCC 11842 / DSM 20081 / BCRC 10696 / JCM 1002 / NBRC 13953 / NCIMB 11778 / NCTC 12712 / WDCM 00102 / Lb 14).